Reading from the N-terminus, the 238-residue chain is tRNA (guanine-N(7)-)-methyltransferase (238 aa).

Residues E68, E93, D120, and D143 each coordinate S-adenosyl-L-methionine. The active site involves D143. Substrate is bound by residues K147, D179, and 216-219 (TKFE).

Belongs to the class I-like SAM-binding methyltransferase superfamily. TrmB family.

It catalyses the reaction guanosine(46) in tRNA + S-adenosyl-L-methionine = N(7)-methylguanosine(46) in tRNA + S-adenosyl-L-homocysteine. Its pathway is tRNA modification; N(7)-methylguanine-tRNA biosynthesis. In terms of biological role, catalyzes the formation of N(7)-methylguanine at position 46 (m7G46) in tRNA. This is tRNA (guanine-N(7)-)-methyltransferase from Stutzerimonas stutzeri (strain A1501) (Pseudomonas stutzeri).